The chain runs to 283 residues: Protein FAM78A (283 aa).

This sequence belongs to the FAM78 family.

This is Protein FAM78A (FAM78A) from Homo sapiens (Human).